The following is a 381-amino-acid chain: MKKSKHLKRPYLKRSHLKHSDKASSFKGLLKKEDNVISLENFKPKESEDLLENFSNKKDMQELLGLLNQFILQSYKVEKEFKDYKALYEWVIEILPQAIWVVNENGSFFYKNSLANQSHEVFNKAKLENFNTEIEHENKSYLVQQNSIQGKQIITATDISAQKRQERLASMGKISAHLAHEIRNPVGSISLLASVLLKHANEKTKPIVVELQKALWRVERIIKATLLFSKGIQANRTKQSLKTLESDLKEALNCYTYSKDIDFLFNFSDEEGFFDFDLMGIVLQNFLYNAIDAIEALEESEQGQVKIEAFIQNEFIVFTIIDNGKEVENKSALFEPFETTKLKGNGLGLALSLQVVKAHEGSIALLENQEKTFEIKILNAS.

A Histidine kinase domain is found at 177 to 381 (HLAHEIRNPV…TFEIKILNAS (205 aa)). Residue H180 is modified to Phosphohistidine; by autocatalysis.

As to quaternary structure, interacts (via its C-terminal kinase domain) with FlhA (via N-terminus). Autophosphorylated.

It catalyses the reaction ATP + protein L-histidine = ADP + protein N-phospho-L-histidine.. Its function is as follows. Member of the two-component regulatory system FlgR/FlgS that induces the transcriptional induction of the genes needed in motility and flagellar biogenesis. Also plays an essential role in bacterial survival at pH 2.5 independently of FlgR. Functions as a sensor protein kinase which is autophosphorylated at a histidine residue and transfers its phosphate group to the conserved aspartic acid residue in the regulatory domain of FlgR. In turn, FlgR functions as a transcriptional regulator initiating transcription from RpoN-dependent promoters. This Helicobacter pylori (strain ATCC 700392 / 26695) (Campylobacter pylori) protein is Sensor histidine kinase FlgS (flgS).